We begin with the raw amino-acid sequence, 183 residues long: NAD(P)H-quinone oxidoreductase subunit I, chloroplastic (183 aa).

4Fe-4S ferredoxin-type domains are found at residues 55–84 (GRIHFEFDKCIACEVCVRVCPINLPVVDWK) and 95–124 (KSYSIDFGVCIFCGNCVEYCPTNCLSMTEE). The [4Fe-4S] cluster site is built by Cys-64, Cys-67, Cys-70, Cys-74, Cys-104, Cys-107, Cys-110, and Cys-114.

This sequence belongs to the complex I 23 kDa subunit family. NDH is composed of at least 16 different subunits, 5 of which are encoded in the nucleus. It depends on [4Fe-4S] cluster as a cofactor.

It is found in the plastid. The protein localises to the chloroplast thylakoid membrane. The catalysed reaction is a plastoquinone + NADH + (n+1) H(+)(in) = a plastoquinol + NAD(+) + n H(+)(out). It carries out the reaction a plastoquinone + NADPH + (n+1) H(+)(in) = a plastoquinol + NADP(+) + n H(+)(out). Functionally, NDH shuttles electrons from NAD(P)H:plastoquinone, via FMN and iron-sulfur (Fe-S) centers, to quinones in the photosynthetic chain and possibly in a chloroplast respiratory chain. The immediate electron acceptor for the enzyme in this species is believed to be plastoquinone. Couples the redox reaction to proton translocation, and thus conserves the redox energy in a proton gradient. The chain is NAD(P)H-quinone oxidoreductase subunit I, chloroplastic from Anthoceros angustus (Hornwort).